Reading from the N-terminus, the 165-residue chain is MTDALEQSVLALEGTVSVLKDSVESLKCANEPSTNLASTMLQTKRVFRLVPEYDVERSKLDLIEEVEPLVRTLGDKLRKSMGRMQRELDTLQQTYELNDLRLKKNISMDDDDALNSPDMGQEYEGRDADDVVMMASSTNEELEELKKLKEKKKQLENKLEILKQK.

Residues 74–104 (GDKLRKSMGRMQRELDTLQQTYELNDLRLKK) are a coiled coil. 2 positions are modified to phosphoserine: serine 107 and serine 116. The stretch at 132 to 165 (VMMASSTNEELEELKKLKEKKKQLENKLEILKQK) forms a coiled coil.

The protein belongs to the DASH complex SPC19 family. Component of the DASH complex consisting of ASK1, DAD1, DAD2, DAD3, DAD4, DAM1, DUO1, HSK3, SPC19 and SPC34, with a stoichiometry of one copy of each subunit per complex. Multiple DASH complexes oligomerize to form a ring that encircles spindle microtubules and organizes the rod-like NDC80 complexes of the outer kinetochore. DASH complex oligomerization strengthens microtubule attachments. On cytoplasmic microtubules, DASH complexes appear to form patches instead of rings.

Its subcellular location is the nucleus. The protein resides in the cytoplasm. It localises to the cytoskeleton. The protein localises to the spindle. It is found in the chromosome. Its subcellular location is the centromere. The protein resides in the kinetochore. Its function is as follows. Component of the DASH complex that connects microtubules with kinetochores and couples microtubule depolymerisation to chromosome movement; it is involved in retrieving kinetochores to the spindle poles before their re-orientation on the spindle in early mitosis and allows microtubule depolymerization to pull chromosomes apart and resist detachment during anaphase. Kinetochores, consisting of a centromere-associated inner segment and a microtubule-contacting outer segment, play a crucial role in chromosome segregation by mediating the physical connection between centromeric DNA and microtubules. Kinetochores also serve as an input point for the spindle assembly checkpoint, which delays anaphase until all chromosomes have bioriented on the mitotic spindle. During spindle-kinetochore attachment, kinetochores first attach to the lateral surface of spindle microtubules, which supports the congression of chromosomes toward the middle of the dividing cell; they then slide along towards the spindle pole, a process independent of the DASH complex but requiring the NDC80 complex. When the end of a disassembling microtubule reaches the laterally attached kinetochore, the DASH complex together with the NDC80 complex and STU2 convert lateral attachment to end-on capture to produce a structure that can track with microtubule shortening and sustain attachment when tension is applied across sister kinetochores upon their biorientation. Microtubule depolymerization proceeds by protofilament splaying and induces the kinetochore-attached DASH complex to slide longitudinally, thereby helping to transduce depolymerization energy into pulling forces to disjoin chromatids. Incorrect microtubule attachments are corrected by releasing microubules from the kinetochore through phosphorylation by IPL1 of kinetochore components. Links the microtubule cytoskeleton to chromosomes during interphase. Also contributes to the poleward transport of kinetochores on microtubules following centromeric DNA replication in S-phase. This chain is DASH complex subunit SPC19 (SPC19), found in Saccharomyces cerevisiae (strain ATCC 204508 / S288c) (Baker's yeast).